The primary structure comprises 264 residues: Acyl-[acyl-carrier-protein]--UDP-N-acetylglucosamine O-acyltransferase (264 aa).

It belongs to the transferase hexapeptide repeat family. LpxA subfamily. As to quaternary structure, homotrimer.

Its subcellular location is the cytoplasm. The enzyme catalyses a (3R)-hydroxyacyl-[ACP] + UDP-N-acetyl-alpha-D-glucosamine = a UDP-3-O-[(3R)-3-hydroxyacyl]-N-acetyl-alpha-D-glucosamine + holo-[ACP]. Its pathway is glycolipid biosynthesis; lipid IV(A) biosynthesis; lipid IV(A) from (3R)-3-hydroxytetradecanoyl-[acyl-carrier-protein] and UDP-N-acetyl-alpha-D-glucosamine: step 1/6. Functionally, involved in the biosynthesis of lipid A, a phosphorylated glycolipid that anchors the lipopolysaccharide to the outer membrane of the cell. The protein is Acyl-[acyl-carrier-protein]--UDP-N-acetylglucosamine O-acyltransferase of Rickettsia typhi (strain ATCC VR-144 / Wilmington).